The sequence spans 318 residues: Non-homologous end joining protein Ku (318 aa).

Residues 10–193 (AFGLVNVPVK…EVQIKPAELK (184 aa)) form the Ku domain. A disordered region spans residues 259 to 318 (SVKARKGGKSDSKDDSDSESDSKESKSDSKPAKKAPAKKAAAKKSTAKKAPAKKAAAKKS). Positions 266–289 (GKSDSKDDSDSESDSKESKSDSKP) are enriched in basic and acidic residues. The span at 290–318 (AKKAPAKKAAAKKSTAKKAPAKKAAAKKS) shows a compositional bias: basic residues.

This sequence belongs to the prokaryotic Ku family. As to quaternary structure, homodimer. Interacts with Sir2 and probably also with LigD; may form a trimeric complex during NHEJ.

Functionally, with LigD forms a non-homologous end joining (NHEJ) repair enzyme which repairs blunt-end and 5'-overhang double strand breaks (DSB) with about 50% fidelity, and DSB with non-complementary 3' ends. Plays a partial role in NHEJ on 3'-overhang repair of complementary ends. NHEJ repairs DSB with blunt ends and 5' overhangs with a high level of nucleotide insertion/deletion, without a need for microhomology. This protein but not LigD also suppresses homologous recombination. Overexpression dramatically increases the efficiency of NHEJ with no effect on repair fidelity. In Mycolicibacterium smegmatis (strain ATCC 700084 / mc(2)155) (Mycobacterium smegmatis), this protein is Non-homologous end joining protein Ku.